A 204-amino-acid polypeptide reads, in one-letter code: N-(5'-phosphoribosyl)anthranilate isomerase (204 aa).

It belongs to the TrpF family.

It catalyses the reaction N-(5-phospho-beta-D-ribosyl)anthranilate = 1-(2-carboxyphenylamino)-1-deoxy-D-ribulose 5-phosphate. The protein operates within amino-acid biosynthesis; L-tryptophan biosynthesis; L-tryptophan from chorismate: step 3/5. The protein is N-(5'-phosphoribosyl)anthranilate isomerase of Bacillus cereus (strain Q1).